Here is a 249-residue protein sequence, read N- to C-terminus: Aspartate/glutamate leucyltransferase (249 aa).

This sequence belongs to the R-transferase family. Bpt subfamily.

The protein localises to the cytoplasm. It carries out the reaction N-terminal L-glutamyl-[protein] + L-leucyl-tRNA(Leu) = N-terminal L-leucyl-L-glutamyl-[protein] + tRNA(Leu) + H(+). It catalyses the reaction N-terminal L-aspartyl-[protein] + L-leucyl-tRNA(Leu) = N-terminal L-leucyl-L-aspartyl-[protein] + tRNA(Leu) + H(+). Functionally, functions in the N-end rule pathway of protein degradation where it conjugates Leu from its aminoacyl-tRNA to the N-termini of proteins containing an N-terminal aspartate or glutamate. This is Aspartate/glutamate leucyltransferase from Brucella canis (strain ATCC 23365 / NCTC 10854 / RM-666).